A 743-amino-acid polypeptide reads, in one-letter code: Threonine--tRNA ligase (743 aa).

A compositionally biased stretch (low complexity) spans 1–15; it reads MSADSPSSPASSQAA. The interval 1 to 30 is disordered; that stretch reads MSADSPSSPASSQAAEVQVRLPDGSLKTQP. The TGS domain maps to 13–76; sequence QAAEVQVRLP…GEIADDENVV (64 aa). Residues 264 to 619 form a catalytic region; the sequence is DHRVLGKQHG…LIEHFAGAFP (356 aa). Positions 354 to 404 are insert; the sequence is AWSTRLDKDDLSKDDEDKLIAAAEVFGVKLPDYKPSASNDAKKDVLHRWQL. 3 residues coordinate Zn(2+): cysteine 416, histidine 467, and histidine 596.

Belongs to the class-II aminoacyl-tRNA synthetase family. In terms of assembly, homodimer. The cofactor is Zn(2+).

It is found in the cytoplasm. It catalyses the reaction tRNA(Thr) + L-threonine + ATP = L-threonyl-tRNA(Thr) + AMP + diphosphate + H(+). In terms of biological role, catalyzes the attachment of threonine to tRNA(Thr) in a two-step reaction: L-threonine is first activated by ATP to form Thr-AMP and then transferred to the acceptor end of tRNA(Thr). Also edits incorrectly charged L-seryl-tRNA(Thr). This Rhodopirellula baltica (strain DSM 10527 / NCIMB 13988 / SH1) protein is Threonine--tRNA ligase.